Consider the following 456-residue polypeptide: MARGDAPRDSYHLVGISFFILGLGTLLPWNFFITAIPYFQARLAGAGNSTARILSTNHTGPEDAFNFNNWVTLLSQLPLLLFTLLNSFLYQCVPETVRILGSLLAILLLFALTAALVKVDMSPGPFFSITMASVCFINSFSAVLQGSLFGQLGTMPSTYSTLFLSGQGLAGIFAALAMLLSMASGVDAETSALGYFITPCVGILMSIVCYLSLPHLKFARYYLANKSSQAQAQELETKAELLQSDENGIPSSPQKVALTLDLDLEKEPESEPDEPQKPGKPSVFTVFQKIWLTALCLVLVFTVTLSVFPAITAMVTSSTSPGKWSQFFNPICCFLLFNIMDWLGRSLTSYFLWPDEDSRLLPLLVCLRFLFVPLFMLCHVPQRSRLPILFPQDAYFITFMLLFAVSNGYLVSLTMCLAPRQVLPHEREVAGALMTFFLALGLSCGASLSFLFKALL.

The helical transmembrane segment at 13 to 33 (LVGISFFILGLGTLLPWNFFI) threads the bilayer. Residues asparagine 48 and asparagine 57 are each glycosylated (N-linked (GlcNAc...) asparagine). Helical transmembrane passes span 70–90 (WVTL…SFLY), 99–119 (ILGS…LVKV), 124–144 (GPFF…SAVL), 162–182 (LFLS…LLSM), and 193–213 (LGYF…YLSL). N-linked (GlcNAc...) asparagine glycosylation occurs at asparagine 225. Residue serine 252 is modified to Phosphoserine. 5 consecutive transmembrane segments (helical) span residues 291-311 (WLTA…FPAI), 324-344 (WSQF…DWLG), 360-380 (LLPL…LCHV), 386-406 (LPIL…FAVS), and 432-452 (ALMT…SFLF).

Belongs to the SLC29A/ENT transporter (TC 2.A.57) family. Glycosylated. Highly expressed in skeletal muscle. Expressed in liver, lung, placenta, brain, heart, kidney and ovarian tissues. Expressed in testis at the blood-brain-barrier.

The protein localises to the apical cell membrane. Its subcellular location is the basolateral cell membrane. It carries out the reaction inosine(in) = inosine(out). The catalysed reaction is adenosine(in) = adenosine(out). It catalyses the reaction uridine(out) = uridine(in). The enzyme catalyses thymidine(in) = thymidine(out). It carries out the reaction hypoxanthine(out) = hypoxanthine(in). The catalysed reaction is adenine(out) = adenine(in). It catalyses the reaction cytidine(in) = cytidine(out). The enzyme catalyses thymine(out) = thymine(in). It carries out the reaction uracil(in) = uracil(out). The catalysed reaction is guanine(out) = guanine(in). It catalyses the reaction guanosine(in) = guanosine(out). Its function is as follows. Bidirectional uniporter involved in the facilitative transport of nucleosides and nucleobases, and contributes to maintaining their cellular homeostasis. Functions as a Na(+)-independent, passive transporter. Involved in the transport of nucleosides such as inosine, adenosine, uridine, thymidine, cytidine and guanosine. Also able to transport purine nucleobases (hypoxanthine, adenine, guanine) and pyrimidine nucleobases (thymine, uracil). Involved in nucleoside transport at basolateral membrane of kidney cells, allowing liver absorption of nucleoside metabolites. Mediates apical nucleoside uptake into Sertoli cells, thereby regulating the transport of nucleosides in testis across the blood-testis-barrier. Mediates both the influx and efflux of hypoxanthine in skeletal muscle microvascular endothelial cells to control the amount of intracellular hypoxanthine available for xanthine oxidase-mediated ROS production. Functionally, non functional nucleoside transporter protein for adenosine or thymidine transport. Does not express on cell membrane. The protein is Equilibrative nucleoside transporter 2 of Homo sapiens (Human).